The sequence spans 358 residues: Methylthioribose-1-phosphate isomerase (358 aa).

Substrate is bound by residues 54 to 56 and Gln205; that span reads CGA. Asp246 acts as the Proton donor in catalysis. 256-257 is a binding site for substrate; sequence NQ.

Belongs to the eIF-2B alpha/beta/delta subunits family. MtnA subfamily.

It catalyses the reaction 5-(methylsulfanyl)-alpha-D-ribose 1-phosphate = 5-(methylsulfanyl)-D-ribulose 1-phosphate. The protein operates within amino-acid biosynthesis; L-methionine biosynthesis via salvage pathway; L-methionine from S-methyl-5-thio-alpha-D-ribose 1-phosphate: step 1/6. In terms of biological role, catalyzes the interconversion of methylthioribose-1-phosphate (MTR-1-P) into methylthioribulose-1-phosphate (MTRu-1-P). In Pseudomonas fluorescens (strain ATCC BAA-477 / NRRL B-23932 / Pf-5), this protein is Methylthioribose-1-phosphate isomerase.